The primary structure comprises 251 residues: CDP-diacylglycerol pyrophosphatase (251 aa).

Residues 4 to 24 (AGLLFLVMIVIAVVAAGIGYW) form a helical membrane-spanning segment.

This sequence belongs to the Cdh family.

The protein resides in the cell inner membrane. The catalysed reaction is a CDP-1,2-diacyl-sn-glycerol + H2O = a 1,2-diacyl-sn-glycero-3-phosphate + CMP + 2 H(+). It functions in the pathway phospholipid metabolism; CDP-diacylglycerol degradation; phosphatidate from CDP-diacylglycerol: step 1/1. The polypeptide is CDP-diacylglycerol pyrophosphatase (Escherichia coli O7:K1 (strain IAI39 / ExPEC)).